Reading from the N-terminus, the 505-residue chain is Tyrosine-protein kinase Blk (505 aa).

A disordered region spans residues Met1–Pro37. A lipid anchor (N-myristoyl glycine) is attached at Gly2. The span at Lys7–Gly21 shows a compositional bias: basic and acidic residues. Residues Glu58–Ser118 form the SH3 domain. Residues Trp124–Cys220 form the SH2 domain. In terms of domain architecture, Protein kinase spans Leu241–Tyr494. Residues Leu247–Val255 and Lys269 each bind ATP. Asp360 serves as the catalytic Proton acceptor. Tyr389 carries the phosphotyrosine; by autocatalysis modification.

This sequence belongs to the protein kinase superfamily. Tyr protein kinase family. SRC subfamily. Interacts with CBL (via SH2 domain). Interacts with CD79A and CD79B (via SH2 domain). Post-translationally, phosphorylated on tyrosine residues after antibody-mediated surface engagement of the B-cell antigen receptor (BCR). Ubiquitination of activated BLK by the UBE3A ubiquitin protein ligase leads to its degradation by the ubiquitin-proteasome pathway. As to expression, expressed in lymphatic organs, pancreatic islets, Leydig cells, striate ducts of salivary glands and hair follicles.

Its subcellular location is the cell membrane. It carries out the reaction L-tyrosyl-[protein] + ATP = O-phospho-L-tyrosyl-[protein] + ADP + H(+). Its activity is regulated as follows. Antibody-mediated surface engagement of the B-cell antigen receptor (BCR) which results in the phosphorylation of BLK on tyrosine residues, stimulates the enzymatic activity. Non-receptor tyrosine kinase involved in B-lymphocyte development, differentiation and signaling. B-cell receptor (BCR) signaling requires a tight regulation of several protein tyrosine kinases and phosphatases, and associated coreceptors. Binding of antigen to the B-cell antigen receptor (BCR) triggers signaling that ultimately leads to B-cell activation. Signaling through BLK plays an important role in transmitting signals through surface immunoglobulins and supports the pro-B to pre-B transition, as well as the signaling for growth arrest and apoptosis downstream of B-cell receptor. Specifically binds and phosphorylates CD79A at 'Tyr-188'and 'Tyr-199', as well as CD79B at 'Tyr-196' and 'Tyr-207'. Also phosphorylates the immunoglobulin G receptors FCGR2A, FCGR2B and FCGR2C. With FYN and LYN, plays an essential role in pre-B-cell receptor (pre-BCR)-mediated NF-kappa-B activation. Also contributes to BTK activation by indirectly stimulating BTK intramolecular autophosphorylation. In pancreatic islets, acts as a modulator of beta-cells function through the up-regulation of PDX1 and NKX6-1 and consequent stimulation of insulin secretion in response to glucose. Phosphorylates CGAS, promoting retention of CGAS in the cytosol. This chain is Tyrosine-protein kinase Blk (BLK), found in Homo sapiens (Human).